The chain runs to 310 residues: Olfactory receptor 8G3 (310 aa).

At 1-25 (MDPGNHSSVTESILAGLSEQPELQL) the chain is on the extracellular side. Residue asparagine 5 is glycosylated (N-linked (GlcNAc...) asparagine). The helical transmembrane segment at 26–46 (RLFLLFLGICVVTVVGNLGMI) threads the bilayer. Residues 47-54 (TLIGLSSH) are Cytoplasmic-facing. A helical membrane pass occupies residues 55 to 75 (LHTPMYYFLSSLSFIDFCHST). Residues 76–99 (VITPKMLVNFATEKNIISYPECMA) are Extracellular-facing. A disulfide bridge connects residues cysteine 97 and cysteine 189. The chain crosses the membrane as a helical span at residues 100 to 120 (QLYLFSIFAIAECHMLAAMAY). Residues 121-139 (DCYVAICSPLLYNVIMSYH) lie on the Cytoplasmic side of the membrane. Residues 140–160 (HCFWLTVGVYILGILGSTIHT) traverse the membrane as a helical segment. Residues 161-197 (SFMLRLFLCKTNVINHYFCDLFPLLGLSCSSTYINEL) lie on the Extracellular side of the membrane. A helical transmembrane segment spans residues 198-217 (LVLVLSAFNILMPALTILAS). Over 218–237 (YIFIIASILRIHSTEGRSKA) the chain is Cytoplasmic. A helical membrane pass occupies residues 238-258 (FSTCSSHILAVAVFFGSAAFM). Topologically, residues 259 to 271 (YLQPSSVSSMDQR) are extracellular. A helical transmembrane segment spans residues 272-292 (KVSSVFYTTIVPMLNPLIYSL). At 293-310 (RNKDVKLAVKKILHQTAC) the chain is on the cytoplasmic side.

Belongs to the G-protein coupled receptor 1 family.

It localises to the cell membrane. Its function is as follows. Odorant receptor. The chain is Olfactory receptor 8G3 from Homo sapiens (Human).